Consider the following 92-residue polypeptide: uncharacterized protein (92 aa).

This is an uncharacterized protein from Escherichia coli (strain K12).